We begin with the raw amino-acid sequence, 232 residues long: Ubiquinone biosynthesis O-methyltransferase (232 aa).

Residues arginine 36, glycine 55, aspartate 76, and leucine 120 each coordinate S-adenosyl-L-methionine.

Belongs to the methyltransferase superfamily. UbiG/COQ3 family.

It catalyses the reaction a 3-demethylubiquinol + S-adenosyl-L-methionine = a ubiquinol + S-adenosyl-L-homocysteine + H(+). The catalysed reaction is a 3-(all-trans-polyprenyl)benzene-1,2-diol + S-adenosyl-L-methionine = a 2-methoxy-6-(all-trans-polyprenyl)phenol + S-adenosyl-L-homocysteine + H(+). It functions in the pathway cofactor biosynthesis; ubiquinone biosynthesis. O-methyltransferase that catalyzes the 2 O-methylation steps in the ubiquinone biosynthetic pathway. The protein is Ubiquinone biosynthesis O-methyltransferase of Pseudomonas putida (strain GB-1).